We begin with the raw amino-acid sequence, 483 residues long: Rhamnulokinase (483 aa).

ATP is bound at residue 11–15 (ASSGR). Substrate is bound by residues Gly-79 and 234–236 (HDT). Catalysis depends on Asp-235, which acts as the Proton acceptor. Thr-257 contacts ATP. Residue Asn-294 participates in substrate binding. Residue Gln-302 participates in ATP binding. A disulfide bridge connects residues Cys-352 and Cys-369. Gly-401 serves as a coordination point for ATP.

This sequence belongs to the rhamnulokinase family. The cofactor is Mg(2+).

It carries out the reaction L-rhamnulose + ATP = L-rhamnulose 1-phosphate + ADP + H(+). It participates in carbohydrate degradation; L-rhamnose degradation; glycerone phosphate from L-rhamnose: step 2/3. Involved in the catabolism of L-rhamnose (6-deoxy-L-mannose). Catalyzes the transfer of the gamma-phosphate group from ATP to the 1-hydroxyl group of L-rhamnulose to yield L-rhamnulose 1-phosphate. The chain is Rhamnulokinase from Listeria monocytogenes serovar 1/2a (strain ATCC BAA-679 / EGD-e).